The primary structure comprises 292 residues: Ribosomal protein L11 methyltransferase (292 aa).

S-adenosyl-L-methionine contacts are provided by T143, G164, D186, and N228.

This sequence belongs to the methyltransferase superfamily. PrmA family.

Its subcellular location is the cytoplasm. It catalyses the reaction L-lysyl-[protein] + 3 S-adenosyl-L-methionine = N(6),N(6),N(6)-trimethyl-L-lysyl-[protein] + 3 S-adenosyl-L-homocysteine + 3 H(+). Methylates ribosomal protein L11. The sequence is that of Ribosomal protein L11 methyltransferase from Aeromonas hydrophila subsp. hydrophila (strain ATCC 7966 / DSM 30187 / BCRC 13018 / CCUG 14551 / JCM 1027 / KCTC 2358 / NCIMB 9240 / NCTC 8049).